The chain runs to 149 residues: Ribonuclease pancreatic (149 aa).

The first 25 residues, 1–25 (MGLEKSLILFPLFVLLLGWVQPSLG), serve as a signal peptide directing secretion. The interval 30-49 (AQKFERQHMDSSGSSNNSPT) is disordered. Residues Lys-32 and Arg-35 each contribute to the substrate site. The Proton acceptor role is filled by His-37. Residues 39 to 49 (DSSGSSNNSPT) show a composition bias toward polar residues. 4 disulfides stabilise this stretch: Cys-51–Cys-109, Cys-65–Cys-120, Cys-83–Cys-135, and Cys-90–Cys-97. 66 to 70 (KPVNT) lines the substrate pocket. Asn-87 is a glycosylation site (N-linked (GlcNAc...) asparagine). Lys-91 provides a ligand contact to substrate. Residue His-144 is the Proton donor of the active site.

This sequence belongs to the pancreatic ribonuclease family. Monomer. Interacts with and forms tight 1:1 complexes with RNH1. Dimerization of two such complexes may occur. Interaction with RNH1 inhibits this protein. As to expression, pancreas.

The protein localises to the secreted. The catalysed reaction is an [RNA] containing cytidine + H2O = an [RNA]-3'-cytidine-3'-phosphate + a 5'-hydroxy-ribonucleotide-3'-[RNA].. The enzyme catalyses an [RNA] containing uridine + H2O = an [RNA]-3'-uridine-3'-phosphate + a 5'-hydroxy-ribonucleotide-3'-[RNA].. Endonuclease that catalyzes the cleavage of RNA on the 3' side of pyrimidine nucleotides. Acts on single-stranded and double-stranded RNA. The protein is Ribonuclease pancreatic (Rnase1) of Mus pahari (Gairdner's shrew-mouse).